The sequence spans 175 residues: Large ribosomal subunit protein uL10 (175 aa).

Belongs to the universal ribosomal protein uL10 family. In terms of assembly, part of the ribosomal stalk of the 50S ribosomal subunit. The N-terminus interacts with L11 and the large rRNA to form the base of the stalk. The C-terminus forms an elongated spine to which L12 dimers bind in a sequential fashion forming a multimeric L10(L12)X complex.

In terms of biological role, forms part of the ribosomal stalk, playing a central role in the interaction of the ribosome with GTP-bound translation factors. This is Large ribosomal subunit protein uL10 from Cupriavidus taiwanensis (strain DSM 17343 / BCRC 17206 / CCUG 44338 / CIP 107171 / LMG 19424 / R1) (Ralstonia taiwanensis (strain LMG 19424)).